The following is a 165-amino-acid chain: 6,7-dimethyl-8-ribityllumazine synthase (165 aa).

5-amino-6-(D-ribitylamino)uracil-binding positions include Trp-26, 58-60, and 80-82; these read SIE and VVI. 85-86 serves as a coordination point for (2S)-2-hydroxy-3-oxobutyl phosphate; that stretch reads GT. Catalysis depends on His-88, which acts as the Proton donor. Position 113 (Asn-113) interacts with 5-amino-6-(D-ribitylamino)uracil. Arg-127 provides a ligand contact to (2S)-2-hydroxy-3-oxobutyl phosphate.

It belongs to the DMRL synthase family.

It carries out the reaction (2S)-2-hydroxy-3-oxobutyl phosphate + 5-amino-6-(D-ribitylamino)uracil = 6,7-dimethyl-8-(1-D-ribityl)lumazine + phosphate + 2 H2O + H(+). It functions in the pathway cofactor biosynthesis; riboflavin biosynthesis; riboflavin from 2-hydroxy-3-oxobutyl phosphate and 5-amino-6-(D-ribitylamino)uracil: step 1/2. Functionally, catalyzes the formation of 6,7-dimethyl-8-ribityllumazine by condensation of 5-amino-6-(D-ribitylamino)uracil with 3,4-dihydroxy-2-butanone 4-phosphate. This is the penultimate step in the biosynthesis of riboflavin. This chain is 6,7-dimethyl-8-ribityllumazine synthase, found in Saccharopolyspora erythraea (strain ATCC 11635 / DSM 40517 / JCM 4748 / NBRC 13426 / NCIMB 8594 / NRRL 2338).